Reading from the N-terminus, the 615-residue chain is Vitamin B12 transporter BtuB (615 aa).

The signal sequence occupies residues 1 to 20 (MIKKISLLTALSVTAFSGWA). The TonB box signature appears at 26–33 (NAMVVTAN). Residues 38–152 (PVNSVLAPTT…IGGVVNIITT (115 aa)) enclose the TBDR plug domain. Cyanocob(III)alamin contacts are provided by residues Ser85, Asn92, and 110–111 (IS). The TBDR beta-barrel domain maps to 155 to 615 (KNGTTLNAGV…EYYLTGSYTF (461 aa)). 3 consecutive transmembrane segments (beta stranded) span residues 158–165 (TTLNAGVG), 169–178 (YQSYDAATQQ), and 184–195 (TTATLAGNYVYT). Ca(2+) contacts are provided by Asp199, Gln210, Asp212, and Asp214. The next 2 beta stranded transmembrane spans lie at 216-226 (FMSKSLYGTVE) and 231-247 (DQFS…NRTD). Ca(2+) is bound by residues Tyr248, Asp249, and Asp255. Beta stranded transmembrane passes span 257 to 271 (RQLY…LRYQ), 273 to 290 (GIYS…KDYD), 303 to 319 (TLVD…NVLQ), 322 to 331 (AGTVSAGVDW), 347 to 363 (ESQN…QRFA), 365 to 375 (IVLEGSVRGDD), 379 to 394 (FGWH…WEFI), 397 to 411 (YSLI…KAPN), 429 to 438 (ESKQWESGVE), 444 to 453 (VIWRVSGYRN), 468 to 486 (VYEN…TASF), 490 to 505 (PVGH…SRNA), 513 to 525 (RRAK…QLDW), and 531 to 546 (DWSV…YDKD). Thr303 is a binding site for cyanocob(III)alamin. Residue Arg513 coordinates cyanocob(III)alamin. Tyr547 serves as a coordination point for cyanocob(III)alamin. A run of 3 beta stranded transmembrane segments spans residues 559–573 (TVKL…LAAS), 586–597 (IANLFDKDYETA), and 603–615 (AGRE…SYTF). Residues 598–615 (YGYRTAGREYYLTGSYTF) carry the TonB C-terminal box motif.

Belongs to the TonB-dependent receptor family. BtuB (TC 1.B.14.3.1) subfamily.

Its subcellular location is the cell outer membrane. Its function is as follows. Involved in the active translocation of vitamin B12 (cyanocobalamin) across the outer membrane to the periplasmic space. It derives its energy for transport by interacting with the trans-periplasmic membrane protein TonB. This Pectobacterium atrosepticum (strain SCRI 1043 / ATCC BAA-672) (Erwinia carotovora subsp. atroseptica) protein is Vitamin B12 transporter BtuB.